A 396-amino-acid polypeptide reads, in one-letter code: NADH-quinone oxidoreductase subunit D 1 (396 aa).

Belongs to the complex I 49 kDa subunit family. As to quaternary structure, NDH-1 is composed of 14 different subunits. Subunits NuoB, C, D, E, F, and G constitute the peripheral sector of the complex.

The protein resides in the cell inner membrane. The catalysed reaction is a quinone + NADH + 5 H(+)(in) = a quinol + NAD(+) + 4 H(+)(out). Its function is as follows. NDH-1 shuttles electrons from NADH, via FMN and iron-sulfur (Fe-S) centers, to quinones in the respiratory chain. The immediate electron acceptor for the enzyme in this species is believed to be ubiquinone. Couples the redox reaction to proton translocation (for every two electrons transferred, four hydrogen ions are translocated across the cytoplasmic membrane), and thus conserves the redox energy in a proton gradient. This Rhizobium etli (strain ATCC 51251 / DSM 11541 / JCM 21823 / NBRC 15573 / CFN 42) protein is NADH-quinone oxidoreductase subunit D 1.